A 504-amino-acid polypeptide reads, in one-letter code: Maturase K (504 aa).

Belongs to the intron maturase 2 family. MatK subfamily.

It is found in the plastid. Its subcellular location is the chloroplast. In terms of biological role, usually encoded in the trnK tRNA gene intron. Probably assists in splicing its own and other chloroplast group II introns. The protein is Maturase K of Nepenthes alata (Winged pitcher plant).